Reading from the N-terminus, the 794-residue chain is Zinc finger protein 148 (794 aa).

A Glycyl lysine isopeptide (Lys-Gly) (interchain with G-Cter in SUMO2) cross-link involves residue K6. S51 carries the phosphoserine modification. Glycyl lysine isopeptide (Lys-Gly) (interchain with G-Cter in SUMO2) cross-links involve residues K88, K115, and K132. The C2H2-type 1 zinc-finger motif lies at 171-193 (HVCEHCNAAFRTNYHLQRHVFIH). T194 is subject to Phosphothreonine. C2H2-type zinc fingers lie at residues 199–221 (FQCS…EKIH) and 227–249 (FRCD…KRTH). S250 bears the Phosphoserine mark. The C2H2-type 4 zinc-finger motif lies at 255–278 (YQCEYCLQYFSRTDRVLKHKRMCH). K291 participates in a covalent cross-link: Glycyl lysine isopeptide (Lys-Gly) (interchain with G-Cter in SUMO2). Residues 298–336 (EEDSGFSTSPKDNSLPKKKRQKTEKKSSGMDKESVLDKS) form a disordered region. Phosphoserine occurs at positions 301 and 306. A Glycyl lysine isopeptide (Lys-Gly) (interchain with G-Cter in SUMO2) cross-link involves residue K308. Over residues 321-336 (EKKSSGMDKESVLDKS) the composition is skewed to basic and acidic residues. K356 is covalently cross-linked (Glycyl lysine isopeptide (Lys-Gly) (interchain with G-Cter in SUMO1); alternate). Residue K356 forms a Glycyl lysine isopeptide (Lys-Gly) (interchain with G-Cter in SUMO2); alternate linkage. Residue K402 forms a Glycyl lysine isopeptide (Lys-Gly) (interchain with G-Cter in SUMO2) linkage. At S412 the chain carries Phosphoserine. Glycyl lysine isopeptide (Lys-Gly) (interchain with G-Cter in SUMO2) cross-links involve residues K421 and K424. The segment covering 574–588 (NSSDVPEVTQSENVG) has biased composition (polar residues). Positions 574–599 (NSSDVPEVTQSENVGSSSQASSSDKA) are disordered. The residue at position 607 (K607) is an N6-acetyllysine. Residues S665 and S784 each carry the phosphoserine modification.

This sequence belongs to the krueppel C2H2-type zinc-finger protein family. Interacts with HNRNPDL. Interacts with the 5FMC complex; the interaction requires association with CHTOP. Interacts with CAVIN1. Sumoylated with SUMO2. Desumoylated by SENP3, resulting in the stimulation of transcription of its target genes. In terms of tissue distribution, strong expression detected in brain, lung, liver and kidney, with lower levels detected in spleen, skeletal muscle, testis and heart.

It localises to the nucleus. Functionally, involved in transcriptional regulation. Represses the transcription of a number of genes including gastrin, stromelysin and enolase. Binds to the G-rich box in the enhancer region of these genes. This Mus musculus (Mouse) protein is Zinc finger protein 148 (Znf148).